The primary structure comprises 984 residues: Probable beta-galactosidase C (984 aa).

Positions 1-23 (MRLLSFIYLVWLALLTGTPQVSA) are cleaved as a signal peptide. 5 residues coordinate substrate: Tyr82, Asn127, Ala128, Glu129, and Asn187. The Proton donor role is filled by Glu188. Residue Asn197 is glycosylated (N-linked (GlcNAc...) asparagine). Tyr251 contacts substrate. Cys257 and Cys304 form a disulfide bridge. A glycan (N-linked (GlcNAc...) asparagine) is linked at Asn276. Glu287 acts as the Nucleophile in catalysis. Tyr353 is a binding site for substrate. N-linked (GlcNAc...) asparagine glycosylation is found at Asn391, Asn421, Asn434, Asn517, Asn602, Asn677, Asn715, Asn720, Asn759, and Asn805.

This sequence belongs to the glycosyl hydrolase 35 family.

The protein resides in the secreted. The catalysed reaction is Hydrolysis of terminal non-reducing beta-D-galactose residues in beta-D-galactosides.. In terms of biological role, cleaves beta-linked terminal galactosyl residues from gangliosides, glycoproteins, and glycosaminoglycans. This Aspergillus flavus (strain ATCC 200026 / FGSC A1120 / IAM 13836 / NRRL 3357 / JCM 12722 / SRRC 167) protein is Probable beta-galactosidase C (lacC).